Reading from the N-terminus, the 240-residue chain is MAKKPGSQNTSGRGQRDLKVKVKTARGRKLSSTRWLQRQLNDPYVKRARSEGYRGRAAYKILELDDRFRFLVPGARVVDLGCAPGGWCQVAVKRVNALGERTSKAQGSVLGVDLQEMEPIAGATLYQLDFMADDADEQVRVWLGGKADVVMSDMAASSSGHKQTDHLRIIALCEAAAYFAFDVLEEGGTFVAKVLAGGAEGELQKLLKQRFAKVANIKPPASRQDSSEKFVVATGFRAKA.

Residues 1–13 (MAKKPGSQNTSGR) are compositionally biased toward polar residues. A disordered region spans residues 1–20 (MAKKPGSQNTSGRGQRDLKV). S-adenosyl-L-methionine contacts are provided by glycine 85, tryptophan 87, aspartate 113, aspartate 129, and aspartate 153. Lysine 193 (proton acceptor) is an active-site residue.

Belongs to the class I-like SAM-binding methyltransferase superfamily. RNA methyltransferase RlmE family.

The protein localises to the cytoplasm. The catalysed reaction is uridine(2552) in 23S rRNA + S-adenosyl-L-methionine = 2'-O-methyluridine(2552) in 23S rRNA + S-adenosyl-L-homocysteine + H(+). In terms of biological role, specifically methylates the uridine in position 2552 of 23S rRNA at the 2'-O position of the ribose in the fully assembled 50S ribosomal subunit. The polypeptide is Ribosomal RNA large subunit methyltransferase E (Roseobacter denitrificans (strain ATCC 33942 / OCh 114) (Erythrobacter sp. (strain OCh 114))).